The following is a 364-amino-acid chain: Dual-specificity RNA methyltransferase RlmN (364 aa).

The active-site Proton acceptor is E91. The Radical SAM core domain occupies 97–333 (ESDRGTLCIS…VTVRKTRGDD (237 aa)). C104 and C338 are oxidised to a cystine. [4Fe-4S] cluster-binding residues include C111, C115, and C118. S-adenosyl-L-methionine-binding positions include 164–165 (GE), S196, 218–220 (SLH), and N295. C338 serves as the catalytic S-methylcysteine intermediate.

This sequence belongs to the radical SAM superfamily. RlmN family. [4Fe-4S] cluster is required as a cofactor.

It is found in the cytoplasm. The catalysed reaction is adenosine(2503) in 23S rRNA + 2 reduced [2Fe-2S]-[ferredoxin] + 2 S-adenosyl-L-methionine = 2-methyladenosine(2503) in 23S rRNA + 5'-deoxyadenosine + L-methionine + 2 oxidized [2Fe-2S]-[ferredoxin] + S-adenosyl-L-homocysteine. It catalyses the reaction adenosine(37) in tRNA + 2 reduced [2Fe-2S]-[ferredoxin] + 2 S-adenosyl-L-methionine = 2-methyladenosine(37) in tRNA + 5'-deoxyadenosine + L-methionine + 2 oxidized [2Fe-2S]-[ferredoxin] + S-adenosyl-L-homocysteine. Functionally, specifically methylates position 2 of adenine 2503 in 23S rRNA and position 2 of adenine 37 in tRNAs. m2A2503 modification seems to play a crucial role in the proofreading step occurring at the peptidyl transferase center and thus would serve to optimize ribosomal fidelity. The sequence is that of Dual-specificity RNA methyltransferase RlmN from Neisseria meningitidis serogroup B (strain ATCC BAA-335 / MC58).